Here is a 93-residue protein sequence, read N- to C-terminus: Putative defensin-like protein 282 (93 aa).

Positions 1–25 are cleaved as a signal peptide; it reads MANATSFIALAYLLASALMTTVVLG. 3 disulfide bridges follow: cysteine 51–cysteine 83, cysteine 66–cysteine 90, and cysteine 72–cysteine 92.

The protein belongs to the DEFL family.

The protein resides in the secreted. In Arabidopsis thaliana (Mouse-ear cress), this protein is Putative defensin-like protein 282.